Reading from the N-terminus, the 347-residue chain is NADH-ubiquinone oxidoreductase chain 2 (347 aa).

11 helical membrane-spanning segments follow: residues 1–21 (MNPL…IITM), 25–45 (HWLT…PLIM), 59–79 (YFLI…INFM), 96–116 (TIIL…FWVP), 123–143 (LLST…SILY), 153–173 (IILA…LNQT), 178–198 (IMAY…IYNP), 200–220 (LMLL…TILI), 239–259 (ILMM…PLSG), 278–298 (ISLT…RLIY), and 325–345 (FLPT…MMFI).

This sequence belongs to the complex I subunit 2 family. Core subunit of respiratory chain NADH dehydrogenase (Complex I) which is composed of 45 different subunits. Interacts with TMEM242.

The protein localises to the mitochondrion inner membrane. The enzyme catalyses a ubiquinone + NADH + 5 H(+)(in) = a ubiquinol + NAD(+) + 4 H(+)(out). In terms of biological role, core subunit of the mitochondrial membrane respiratory chain NADH dehydrogenase (Complex I) that is believed to belong to the minimal assembly required for catalysis. Complex I functions in the transfer of electrons from NADH to the respiratory chain. The immediate electron acceptor for the enzyme is believed to be ubiquinone. This chain is NADH-ubiquinone oxidoreductase chain 2, found in Oryzorictes hova (Hova rice tenrec).